The sequence spans 682 residues: ATP-dependent zinc metalloprotease FtsH (682 aa).

Over 1 to 7 (MKQSHKT) the chain is Cytoplasmic. The helical transmembrane segment at 8–28 (ILLWALLIFLFVMIYNLISDG) threads the bilayer. Residues 29–138 (TSGEETLDTT…YEVKAKEEST (110 aa)) are Periplasmic-facing. Residues 139-159 (FWQSLLISWLPMLLLFALFFF) traverse the membrane as a helical segment. Topologically, residues 160-682 (FMRQLQAGGG…SGTDPEPEPA (523 aa)) are cytoplasmic. 232-239 (GPPGTGKT) contributes to the ATP binding site. His454 provides a ligand contact to Zn(2+). The active site involves Glu455. 2 residues coordinate Zn(2+): His458 and Asp531. The disordered stretch occupies residues 638 to 682 (LSRPAVVSKPSADAESSVDEDEREARPALFPPLGKSGTDPEPEPA).

It in the central section; belongs to the AAA ATPase family. In the C-terminal section; belongs to the peptidase M41 family. In terms of assembly, homohexamer. Zn(2+) is required as a cofactor.

It is found in the cell inner membrane. Its function is as follows. Acts as a processive, ATP-dependent zinc metallopeptidase for both cytoplasmic and membrane proteins. Plays a role in the quality control of integral membrane proteins. The sequence is that of ATP-dependent zinc metalloprotease FtsH from Haliangium ochraceum (strain DSM 14365 / JCM 11303 / SMP-2).